A 532-amino-acid polypeptide reads, in one-letter code: Protein PTST homolog 2, chloroplastic (532 aa).

A chloroplast-targeting transit peptide spans 1 to 71 (MVSINSGPIS…KPRKKSCCSR (71 aa)). Disordered stretches follow at residues 165 to 201 (QLPN…SRND), 256 to 292 (EVDG…SETW), 314 to 347 (SSGL…EDVN), and 367 to 388 (HSLR…TAGN). The segment covering 173-183 (EMDKTLNHGDL) has biased composition (basic and acidic residues). The segment covering 320-339 (VKKDDTKKDSGDSMNGKDRI) has biased composition (basic and acidic residues). Residues 389 to 454 (LENLSDDWEY…ASRALRLLRT (66 aa)) are a coiled coil.

In terms of assembly, interacts with PTST3 and SS4. Interacts with MFP1; the interaction is essential for the initiation of starch granules biosynthesis in leaf chloroplasts, for the correct location of the process in the stromal spaces between the thylakoid membranes, and for the association of this protein with the thylakoid membranes. Interacts with PII1/MRC; the interaction is essential for the initiation of starch granules biosynthesis in leaf chloroplasts.

The protein resides in the plastid. It is found in the chloroplast. The protein localises to the chloroplast thylakoid membrane. Functionally, involved in starch granule initiation in leaf chloroplasts. Binds and delivers suitable maltooligosaccharide substrates to starch synthase 4 (SS4). This Arabidopsis thaliana (Mouse-ear cress) protein is Protein PTST homolog 2, chloroplastic.